Here is a 223-residue protein sequence, read N- to C-terminus: Small ribosomal subunit protein uS3 (223 aa).

The KH type-2 domain occupies 39–108 (IRKFVKKKGA…VILINIVEVK (70 aa)).

Belongs to the universal ribosomal protein uS3 family. In terms of assembly, part of the 30S ribosomal subunit. Forms a tight complex with proteins S10 and S14.

In terms of biological role, binds the lower part of the 30S subunit head. Binds mRNA in the 70S ribosome, positioning it for translation. The chain is Small ribosomal subunit protein uS3 from Clostridium kluyveri (strain NBRC 12016).